The chain runs to 360 residues: Phospho-N-acetylmuramoyl-pentapeptide-transferase (360 aa).

10 helical membrane passes run 21–41, 73–93, 94–114, 132–152, 168–188, 199–219, 239–259, 263–283, 288–308, and 338–358; these read YITV…LWIG, TMGG…WANL, ANPY…IGFV, WKYF…YWLG, IMPQ…VGTG, GLAI…AWAT, VVVF…FNTY, VFMG…VAIL, FLLV…ILQV, and VIIR…VTLK.

It belongs to the glycosyltransferase 4 family. MraY subfamily. The cofactor is Mg(2+).

The protein localises to the cell inner membrane. It carries out the reaction UDP-N-acetyl-alpha-D-muramoyl-L-alanyl-gamma-D-glutamyl-meso-2,6-diaminopimeloyl-D-alanyl-D-alanine + di-trans,octa-cis-undecaprenyl phosphate = di-trans,octa-cis-undecaprenyl diphospho-N-acetyl-alpha-D-muramoyl-L-alanyl-D-glutamyl-meso-2,6-diaminopimeloyl-D-alanyl-D-alanine + UMP. The protein operates within cell wall biogenesis; peptidoglycan biosynthesis. Its function is as follows. Catalyzes the initial step of the lipid cycle reactions in the biosynthesis of the cell wall peptidoglycan: transfers peptidoglycan precursor phospho-MurNAc-pentapeptide from UDP-MurNAc-pentapeptide onto the lipid carrier undecaprenyl phosphate, yielding undecaprenyl-pyrophosphoryl-MurNAc-pentapeptide, known as lipid I. This chain is Phospho-N-acetylmuramoyl-pentapeptide-transferase, found in Haemophilus influenzae (strain ATCC 51907 / DSM 11121 / KW20 / Rd).